We begin with the raw amino-acid sequence, 191 residues long: Nascent polypeptide-associated complex subunit alpha (191 aa).

Residues 24-89 enclose the NAC-A/B domain; the sequence is SRPERKARKA…AKVEDPNSAA (66 aa). A disordered region spans residues 126 to 149; the sequence is QDAPSADSSAPAPSGEATDASASG. Residues 127–139 are compositionally biased toward low complexity; the sequence is DAPSADSSAPAPS. Positions 153–191 constitute a UBA domain; it reads VSDEEIQLIVAQTGVDEAKAREAYISEKGDLINAIMKLQ.

The protein belongs to the NAC-alpha family. Part of the nascent polypeptide-associated complex (NAC), consisting of EGD2 and EGD1. NAC associates with ribosomes via EGD1.

It localises to the cytoplasm. It is found in the nucleus. Its function is as follows. Component of the nascent polypeptide-associated complex (NAC), a dynamic component of the ribosomal exit tunnel, protecting the emerging polypeptides from interaction with other cytoplasmic proteins to ensure appropriate nascent protein targeting. The NAC complex also promotes mitochondrial protein import by enhancing productive ribosome interactions with the outer mitochondrial membrane and blocks the inappropriate interaction of ribosomes translating non-secretory nascent polypeptides with translocation sites in the membrane of the endoplasmic reticulum. EGD2 may also be involved in transcription regulation. The polypeptide is Nascent polypeptide-associated complex subunit alpha (EGD2) (Cryptococcus neoformans var. neoformans serotype D (strain B-3501A) (Filobasidiella neoformans)).